Here is a 945-residue protein sequence, read N- to C-terminus: Isoleucine--tRNA ligase (945 aa).

Residues 66 to 76 (PYANGDIHLGH) carry the 'HIGH' region motif. Glu581 provides a ligand contact to L-isoleucyl-5'-AMP. The short motif at 622–626 (KMSKS) is the 'KMSKS' region element. Lys625 contacts ATP. Zn(2+) contacts are provided by Cys908, Cys911, Cys928, and Cys931.

Belongs to the class-I aminoacyl-tRNA synthetase family. IleS type 1 subfamily. In terms of assembly, monomer. The cofactor is Zn(2+).

The protein localises to the cytoplasm. The enzyme catalyses tRNA(Ile) + L-isoleucine + ATP = L-isoleucyl-tRNA(Ile) + AMP + diphosphate. In terms of biological role, catalyzes the attachment of isoleucine to tRNA(Ile). As IleRS can inadvertently accommodate and process structurally similar amino acids such as valine, to avoid such errors it has two additional distinct tRNA(Ile)-dependent editing activities. One activity is designated as 'pretransfer' editing and involves the hydrolysis of activated Val-AMP. The other activity is designated 'posttransfer' editing and involves deacylation of mischarged Val-tRNA(Ile). The protein is Isoleucine--tRNA ligase of Burkholderia lata (strain ATCC 17760 / DSM 23089 / LMG 22485 / NCIMB 9086 / R18194 / 383).